Here is a 294-residue protein sequence, read N- to C-terminus: 2-oxo-3-(phosphooxy)propyl 3-oxoalkanoate synthase (294 aa).

The protein belongs to the AfsA family.

It catalyses the reaction a medium-chain 3-oxoacyl-[ACP] + dihydroxyacetone phosphate = a (4-alkanoyl-5-oxo-2,5-dihydrofuran-3-yl)methyl phosphate + holo-[ACP] + H2O. Functionally, involved in the biosynthesis of virginiae butanolide (VB), a gamma-butyrolactone autoregulator that triggers the production of the streptogramin antibiotic virginiamycin. This is 2-oxo-3-(phosphooxy)propyl 3-oxoalkanoate synthase from Streptomyces virginiae (Streptomyces cinnamonensis).